A 38-amino-acid polypeptide reads, in one-letter code: Odorant-binding protein 2 (38 aa).

Belongs to the calycin superfamily. Lipocalin family. Nasal mucosa.

Its subcellular location is the secreted. The protein resides in the extracellular space. Functionally, this soluble protein may play a specific role in odor discrimination and perception. The chain is Odorant-binding protein 2 from Hystrix cristata (North African crested porcupine).